A 216-amino-acid polypeptide reads, in one-letter code: Ribonuclease HII (216 aa).

The RNase H type-2 domain occupies 33–216; sequence WPVAGADEAG…RMSFRPFRQL (184 aa). The a divalent metal cation site is built by Asp39, Glu40, and Asp130.

It belongs to the RNase HII family. Mn(2+) is required as a cofactor. It depends on Mg(2+) as a cofactor.

The protein localises to the cytoplasm. The catalysed reaction is Endonucleolytic cleavage to 5'-phosphomonoester.. Functionally, endonuclease that specifically degrades the RNA of RNA-DNA hybrids. In Sinorhizobium medicae (strain WSM419) (Ensifer medicae), this protein is Ribonuclease HII.